The chain runs to 476 residues: Argininosuccinate lyase (476 aa).

This sequence belongs to the lyase 1 family. Argininosuccinate lyase subfamily.

The protein resides in the cytoplasm. It carries out the reaction 2-(N(omega)-L-arginino)succinate = fumarate + L-arginine. Its pathway is amino-acid biosynthesis; L-arginine biosynthesis; L-arginine from L-ornithine and carbamoyl phosphate: step 3/3. This is Argininosuccinate lyase from Gluconacetobacter diazotrophicus (strain ATCC 49037 / DSM 5601 / CCUG 37298 / CIP 103539 / LMG 7603 / PAl5).